We begin with the raw amino-acid sequence, 513 residues long: MEISWGRALWRNFLGQSPDWYKLALIIFLIVNPLIFLISPFVAGWLLVAEFIFTLAMALKCYPLLPGGLLAIEAVFIGMTSAEHVREEVAANLEVLLLLMFMVAGIYFMKQLLLFIFTRLLLSIRSKMLLSLSFCVAAAFLSAFLDALTVVAVVISVAVGFYGIYHRVASSRAEDTDLQDDSHIDKHYKVVLEQFRGFLRSLMMHAGVGTALGGVMTMVGEPQNLIIAKAAGWHFGDFFLRMSPVTVPVLICGLLTCLLVEKLRWFGYGETLPEKVREVLQQFDDQSRLQRTRQDKIRLIVQAIIGVWLVTALALHLAEVGLIGLSVIILATSLTGVTDEHAIGKAFTESLPFTALLTVFFSVVAVIIDQQLFSPIIQFVLQASEHAQLSLFYIFNGLLSSISDNVFVGTIYINEAKAAMESGAITLKQYELLAVAINTGTNLPSVATPNGQAAFLFLLTSALAPLIRLSYGRMVWMALPYTLVLTVAGLLCVEFTLAPVTEWFMQMGWIATL.

The next 12 membrane-spanning stretches (helical) occupy residues 23–43 (LALIIFLIVNPLIFLISPFVA), 52–72 (IFTLAMALKCYPLLPGGLLAI), 97–117 (LLLMFMVAGIYFMKQLLLFIF), 120–140 (LLLSIRSKMLLSLSFCVAAAF), 144–164 (FLDALTVVAVVISVAVGFYGI), 202–222 (LMMHAGVGTALGGVMTMVGEP), 238–258 (FFLRMSPVTVPVLICGLLTCL), 303–323 (AIIGVWLVTALALHLAEVGLI), 348–368 (TESLPFTALLTVFFSVVAVII), 391–411 (LFYIFNGLLSSISDNVFVGTI), 447–467 (ATPNGQAAFLFLLTSALAPLI), and 475–495 (VWMALPYTLVLTVAGLLCVEF).

Belongs to the NhaB Na(+)/H(+) (TC 2.A.34) antiporter family.

The protein localises to the cell inner membrane. The enzyme catalyses 2 Na(+)(in) + 3 H(+)(out) = 2 Na(+)(out) + 3 H(+)(in). Functionally, na(+)/H(+) antiporter that extrudes sodium in exchange for external protons. This is Na(+)/H(+) antiporter NhaB from Escherichia coli O127:H6 (strain E2348/69 / EPEC).